The following is a 154-amino-acid chain: SsrA-binding protein (154 aa).

It belongs to the SmpB family.

Its subcellular location is the cytoplasm. Its function is as follows. Required for rescue of stalled ribosomes mediated by trans-translation. Binds to transfer-messenger RNA (tmRNA), required for stable association of tmRNA with ribosomes. tmRNA and SmpB together mimic tRNA shape, replacing the anticodon stem-loop with SmpB. tmRNA is encoded by the ssrA gene; the 2 termini fold to resemble tRNA(Ala) and it encodes a 'tag peptide', a short internal open reading frame. During trans-translation Ala-aminoacylated tmRNA acts like a tRNA, entering the A-site of stalled ribosomes, displacing the stalled mRNA. The ribosome then switches to translate the ORF on the tmRNA; the nascent peptide is terminated with the 'tag peptide' encoded by the tmRNA and targeted for degradation. The ribosome is freed to recommence translation, which seems to be the essential function of trans-translation. The chain is SsrA-binding protein from Methylobacillus flagellatus (strain ATCC 51484 / DSM 6875 / VKM B-1610 / KT).